The primary structure comprises 507 residues: ATP synthase subunit alpha, chloroplastic (507 aa).

Residue 170-177 (GDRQTGKT) coordinates ATP.

This sequence belongs to the ATPase alpha/beta chains family. F-type ATPases have 2 components, CF(1) - the catalytic core - and CF(0) - the membrane proton channel. CF(1) has five subunits: alpha(3), beta(3), gamma(1), delta(1), epsilon(1). CF(0) has four main subunits: a, b, b' and c.

The protein localises to the plastid. It is found in the chloroplast thylakoid membrane. It carries out the reaction ATP + H2O + 4 H(+)(in) = ADP + phosphate + 5 H(+)(out). In terms of biological role, produces ATP from ADP in the presence of a proton gradient across the membrane. The alpha chain is a regulatory subunit. The protein is ATP synthase subunit alpha, chloroplastic of Silene latifolia (White campion).